A 217-amino-acid chain; its full sequence is Somatotropin (217 aa).

An N-terminal signal peptide occupies residues Met-1–Ala-27. His-46 serves as a coordination point for Zn(2+). The cysteines at positions 79 and 190 are disulfide-linked. The residue at position 132 (Ser-132) is a Phosphoserine. A Zn(2+)-binding site is contributed by Glu-199. A disulfide bridge links Cys-207 with Cys-215.

The protein belongs to the somatotropin/prolactin family.

It localises to the secreted. Functionally, plays an important role in growth control. Its major role in stimulating body growth is to stimulate the liver and other tissues to secrete IGF1. It stimulates both the differentiation and proliferation of myoblasts. It also stimulates amino acid uptake and protein synthesis in muscle and other tissues. In Cervus elaphus (Red deer), this protein is Somatotropin (GH1).